We begin with the raw amino-acid sequence, 270 residues long: 3-methyl-2-oxobutanoate hydroxymethyltransferase (270 aa).

Asp50 and Asp89 together coordinate Mg(2+). 3-methyl-2-oxobutanoate contacts are provided by residues 50 to 51, Asp89, and Lys118; that span reads DS. Glu120 lines the Mg(2+) pocket. The Proton acceptor role is filled by Glu187.

The protein belongs to the PanB family. As to quaternary structure, homodecamer; pentamer of dimers. The cofactor is Mg(2+).

The protein localises to the cytoplasm. The catalysed reaction is 3-methyl-2-oxobutanoate + (6R)-5,10-methylene-5,6,7,8-tetrahydrofolate + H2O = 2-dehydropantoate + (6S)-5,6,7,8-tetrahydrofolate. The protein operates within cofactor biosynthesis; (R)-pantothenate biosynthesis; (R)-pantoate from 3-methyl-2-oxobutanoate: step 1/2. Its function is as follows. Catalyzes the reversible reaction in which hydroxymethyl group from 5,10-methylenetetrahydrofolate is transferred onto alpha-ketoisovalerate to form ketopantoate. The sequence is that of 3-methyl-2-oxobutanoate hydroxymethyltransferase from Helicobacter pylori (strain G27).